An 811-amino-acid polypeptide reads, in one-letter code: DNA mismatch repair protein MutS (811 aa).

An ATP-binding site is contributed by 595 to 602 (GPNMSGKS).

This sequence belongs to the DNA mismatch repair MutS family.

Functionally, this protein is involved in the repair of mismatches in DNA. It is possible that it carries out the mismatch recognition step. This protein has a weak ATPase activity. This chain is DNA mismatch repair protein MutS, found in Pseudothermotoga lettingae (strain ATCC BAA-301 / DSM 14385 / NBRC 107922 / TMO) (Thermotoga lettingae).